Consider the following 435-residue polypeptide: ATP-dependent protease ATPase subunit HslU (435 aa).

Residues I18, 60-65 (GVGKTE), D248, E313, and R385 contribute to the ATP site.

The protein belongs to the ClpX chaperone family. HslU subfamily. In terms of assembly, a double ring-shaped homohexamer of HslV is capped on each side by a ring-shaped HslU homohexamer. The assembly of the HslU/HslV complex is dependent on binding of ATP.

Its subcellular location is the cytoplasm. In terms of biological role, ATPase subunit of a proteasome-like degradation complex; this subunit has chaperone activity. The binding of ATP and its subsequent hydrolysis by HslU are essential for unfolding of protein substrates subsequently hydrolyzed by HslV. HslU recognizes the N-terminal part of its protein substrates and unfolds these before they are guided to HslV for hydrolysis. The protein is ATP-dependent protease ATPase subunit HslU of Roseobacter denitrificans (strain ATCC 33942 / OCh 114) (Erythrobacter sp. (strain OCh 114)).